Here is a 1037-residue protein sequence, read N- to C-terminus: MDHTECNNRIEYLQNKVLELESLNENLKGQLEYFQTKFLESNLNSEGKDISSCLTEIYNSLSLDNNNNNSNSNSNSNNNSSNSNNNSYSNFNSNNNTTNNTKVIKNRNFKINLTNSNSTNSSPYIFGNNKDNSNNSNNSNNNNSNTELSNDHLSLEDNIATTNTTTTTTINTSNSNNSNNNNNNNNNNNNNNNNNNNNNNKPTSNRPPVAPRSFIRSNSDTFITPPGSPTSSRNSPTNKSSPQFLSPLSKSPLSQSTQSTTVSSPSPSWTTTVPQSKMRSETIVQSKSPYSPDTNISNKLINELASNIGAPNSNGSESPSKNSPRSLNSNNNNSSATTSITTPPTTSTPTPTTSTTTTTTTERRPEDRRSKTSPFPNVGTTTPPLSNSAHLVRTQSASGANAVKPQSQLSTSCTVNMIGGGGTPRSNNSSNGSLYHSMSSNGLIENLSTSSSLSLSSTSPSPNNSQQNLTNPFEIGADDELEVLDDPRLVMVKTENGFIVKGGTIEKLVNRLIAKHDPDFTSAFLLTHKSFTTSIELLDLLIEFYVNNKDSSSINSNSSSSSSSAVASSSFSNINCNISDLSSSTSSTNSLLINSITNSPIINSNNQNNQNNNNNNNNNNNNNNNQLEINGDKKKKAIRLKITNVIKSWVDKHYYDFSEDKQLTLKLDQFITNHIMFDMDKIGFNLKRLLTNDRVVPVPTFTQGPPTPIPPKMKSNGSEINFKDLDPTEIARQLTLYESDLFRKIGAKECLGQAWNKDGKEENAPNIVSFIKRFNQVSSWVATEIVRQEKLKDRVSYIKRFILVAQECRKLNNFNATMEILSGLQNSSVYRLRKTWERVESKPLLKNTLDELMSLMSSGANYKNYIQELHNIHPPCIPYLGVYLTHLTFIEDGMKNVLTTTTATTTNTTTTTTTTTTTTTTNTTTSNNNNQQQLNGANRSFDDVIINFEKCRKISVVIREIKQYQQQQYHLHTEEFTLRYLSNLPSIQTQKSMYKLSLICEPKEKETSSFDSGYGSVSDRPSKKEFSVTSLLNSFKS.

Residues Glu-5 to Gln-35 are a coiled coil. Disordered stretches follow at residues Asn-65–Asn-100, Thr-114–Asn-150, Thr-166–Asn-387, Thr-414–Ser-437, Ser-451–Pro-472, Ile-602–Glu-628, Asn-907–Asn-935, and Glu-1004–Ser-1037. Low complexity-rich tracts occupy residues Thr-114 to Asn-145 and Thr-166 to Asn-200. A compositionally biased stretch (polar residues) spans Pro-229–Lys-239. Residues Ser-240 to Ser-276 are compositionally biased toward low complexity. The span at Thr-282–Leu-300 shows a compositional bias: polar residues. Positions Ser-318–Thr-360 are enriched in low complexity. Over residues Thr-361–Ser-370 the composition is skewed to basic and acidic residues. Polar residues-rich tracts occupy residues Thr-372 to Asn-387 and Pro-424 to Ser-437. In terms of domain architecture, N-terminal Ras-GEF spans Asn-496–Arg-694. The 278-residue stretch at Asp-726–Lys-1003 folds into the Ras-GEF domain. Low complexity predominate over residues Asn-907–Asn-930. Polar residues predominate over residues Ser-1027 to Ser-1037.

Functionally, promotes the exchange of Ras-bound GDP by GTP. Seems to play a role in chemotaxis. In Dictyostelium discoideum (Social amoeba), this protein is Ras guanine nucleotide exchange factor E (gefE).